The sequence spans 247 residues: Fibroblast growth factor 14 (247 aa).

2 disordered regions span residues 1–38 (MAAAIASGLIRQKRQAREQHWDRPSASRRRSSPSKNRG) and 214–247 (VGETVPKPGVTPSKSTSASAIMNGGKPVNKSKTT). The span at 15-25 (QAREQHWDRPS) shows a compositional bias: basic and acidic residues.

It belongs to the heparin-binding growth factors family. In terms of assembly, interacts with SCN8A. Nervous system.

Its subcellular location is the nucleus. Probably involved in nervous system development and function. This chain is Fibroblast growth factor 14 (FGF14), found in Homo sapiens (Human).